Here is a 691-residue protein sequence, read N- to C-terminus: Glycine--tRNA ligase beta subunit (691 aa).

The protein belongs to the class-II aminoacyl-tRNA synthetase family. Tetramer of two alpha and two beta subunits.

The protein localises to the cytoplasm. It catalyses the reaction tRNA(Gly) + glycine + ATP = glycyl-tRNA(Gly) + AMP + diphosphate. In Levilactobacillus brevis (strain ATCC 367 / BCRC 12310 / CIP 105137 / JCM 1170 / LMG 11437 / NCIMB 947 / NCTC 947) (Lactobacillus brevis), this protein is Glycine--tRNA ligase beta subunit.